The sequence spans 494 residues: MTSPQPTETADVVLVGAGIMSATLATLLNDLQPEWRMLVLERLDAAGLESSNAWNNAGTGHSALCELNYAPQAADGTVSAEKALTINEQFQVTRQMWSSLVENGTLEDPNTFINPVPHVSMVFGDDHADYLRARYDAFKPNKLFERMEFTEDRDLIAQWAPLTMHGRGAGRVAATFAPEGTDVDFGALTNQLLNHLQGRNITVEYGQEVTTLDRQSDGSWLVSVVDRLNSDNNRVIRAGFVFLGAGGGALPLLQKSKIKEAKGYGGFPVSGLFLRNTDPTVTAQHNAKVYGQASVGAPPMSVPHLDTRYVNGRRAIMFGPYGGFKPNFLKHGSLLDLPKSVRAHNLYPMTRAGMANLDLVKYLVGELTKTRSQRIDALHEYYPTAEESQWELIEAGQRVQVMKSDPQKGGVLQFGTELVTSADGSIGALLGASPGASTAVPIMLNLLSKCFPAKMSEWEPRIKELIPAYGRKLNDDPRLTDEIMGHTASVLGIK.

It belongs to the MQO family. Requires FAD as cofactor.

It carries out the reaction (S)-malate + a quinone = a quinol + oxaloacetate. It functions in the pathway carbohydrate metabolism; tricarboxylic acid cycle; oxaloacetate from (S)-malate (quinone route): step 1/1. The protein is Probable malate:quinone oxidoreductase of Kocuria rhizophila (strain ATCC 9341 / DSM 348 / NBRC 103217 / DC2201).